Reading from the N-terminus, the 102-residue chain is Secretoglobin family 1D member (102 aa).

An N-terminal signal peptide occupies residues 1–21 (MRLSVTALLVTLALCYYEANA). N-linked (GlcNAc...) asparagine glycosylation is present at Asn87.

This sequence belongs to the secretoglobin family. Lipophilin subfamily.

Its subcellular location is the secreted. Functionally, may bind androgens and other steroids. May be under transcriptional regulation of steroid hormones. The protein is Secretoglobin family 1D member (SCGB1D) of Bos taurus (Bovine).